Here is a 410-residue protein sequence, read N- to C-terminus: Peptidase T (410 aa).

His-79 is a binding site for Zn(2+). Residue Asp-81 is part of the active site. Residue Asp-142 participates in Zn(2+) binding. The Proton acceptor role is filled by Glu-176. Positions 177, 199, and 381 each coordinate Zn(2+).

It belongs to the peptidase M20B family. Zn(2+) is required as a cofactor.

It is found in the cytoplasm. The catalysed reaction is Release of the N-terminal residue from a tripeptide.. Its function is as follows. Cleaves the N-terminal amino acid of tripeptides. This chain is Peptidase T, found in Bacillus cereus (strain B4264).